The following is a 338-amino-acid chain: Ribosomal RNA small subunit methyltransferase H (338 aa).

S-adenosyl-L-methionine-binding positions include 53–55 (GGH), aspartate 72, tyrosine 99, aspartate 123, and glutamine 130. Disordered regions lie at residues 276-297 (EITP…PGMG) and 304-323 (TRGA…RSAP).

The protein belongs to the methyltransferase superfamily. RsmH family.

It is found in the cytoplasm. The enzyme catalyses cytidine(1402) in 16S rRNA + S-adenosyl-L-methionine = N(4)-methylcytidine(1402) in 16S rRNA + S-adenosyl-L-homocysteine + H(+). In terms of biological role, specifically methylates the N4 position of cytidine in position 1402 (C1402) of 16S rRNA. The polypeptide is Ribosomal RNA small subunit methyltransferase H (Rhodococcus jostii (strain RHA1)).